Here is a 187-residue protein sequence, read N- to C-terminus: Putative AgrB-like protein 1 (187 aa).

Transmembrane regions (helical) follow at residues 29–49, 50–70, 81–98, 103–120, and 149–169; these read VVIVLTFEFIKCISVILIAGI, LGYFKESLIVILSMCFIKPFI, CFIATLIITTSIIMLVTF, LFSIVILNLFSIFSIYNK, and ILFLITLIFFKISWISQTITW.

It belongs to the AgrB family.

The protein localises to the cell membrane. Functionally, may be involved in the proteolytic processing of a quorum sensing system signal molecule precursor. In Clostridium perfringens (strain 13 / Type A), this protein is Putative AgrB-like protein 1.